Here is a 487-residue protein sequence, read N- to C-terminus: Adenosylhomocysteinase (487 aa).

Substrate contacts are provided by Thr-76, Asp-151, and Glu-212. 213–215 (TTT) contacts NAD(+). Residues Lys-242 and Asp-246 each contribute to the substrate site. NAD(+) is bound by residues Asn-247, 276 to 281 (GYGDVG), Glu-299, Asn-334, 355 to 357 (IGH), and Asn-403.

Belongs to the adenosylhomocysteinase family. NAD(+) is required as a cofactor.

Its subcellular location is the cytoplasm. The enzyme catalyses S-adenosyl-L-homocysteine + H2O = L-homocysteine + adenosine. It participates in amino-acid biosynthesis; L-homocysteine biosynthesis; L-homocysteine from S-adenosyl-L-homocysteine: step 1/1. Its function is as follows. May play a key role in the regulation of the intracellular concentration of adenosylhomocysteine. In Bacteroides fragilis (strain YCH46), this protein is Adenosylhomocysteinase.